The sequence spans 147 residues: Receptor activity-modifying protein 3 (147 aa).

The signal sequence occupies residues 1 to 22 (MATPAQRLHLLPLLLLLCGECA). Residues 23 to 112 (QVCGCNETGM…CTVDRTHWED (90 aa)) lie on the Extracellular side of the membrane. Residues N28, N57, N70, and N102 are each glycosylated (N-linked (GlcNAc...) asparagine). 2 disulfide bridges follow: C39/C71 and C56/C103. The chain crosses the membrane as a helical span at residues 113–137 (PPDEVLIPLIAVPVLLTVAMAGLVV). Topologically, residues 138 to 147 (WRSKRTDRLL) are cytoplasmic.

The protein belongs to the RAMP family. Heterodimer of CALCRL and RAMP3; interaction induces allosteric modulation of CALCRL function and ligand specificity for adrenomedullin/ADM and intermedin/ADM2. Heterodimer of CALCR and RAMP3; interaction form the receptor complex AMYR3 for amylin/IAPP. Interacts with GPER1.

It is found in the cell membrane. The protein resides in the membrane. In terms of biological role, accessory protein that interacts with and modulates the function of G-protein coupled receptors including calcitonin gene-related peptide type 1 receptor (CALCRL), calcitonin receptor (CALCR) and G-protein coupled estrogen receptor 1 (GPER1). Required for the transport of CALCRL and GPER1 receptors to the plasma membrane. Plays a role in cardioprotection by reducing cardiac hypertrophy and perivascular fibrosis in a GPER1-dependent manner. Together with CALCRL, form a receptor complex for adrenomedullin/ADM and intermedin/ADM2. Together with CALCR, act as a receptor complex for amylin/IAPP. The sequence is that of Receptor activity-modifying protein 3 from Rattus norvegicus (Rat).